We begin with the raw amino-acid sequence, 407 residues long: Argininosuccinate synthase (407 aa).

ATP-binding positions include alanine 16 to serine 24 and alanine 44. Residues tyrosine 96 and serine 101 each coordinate L-citrulline. An ATP-binding site is contributed by glycine 126. Residues threonine 128, asparagine 132, and aspartate 133 each coordinate L-aspartate. Asparagine 132 is an L-citrulline binding site. L-citrulline contacts are provided by arginine 136, serine 185, serine 194, glutamate 270, and tyrosine 282.

Belongs to the argininosuccinate synthase family. Type 1 subfamily. Homotetramer.

The protein resides in the cytoplasm. The enzyme catalyses L-citrulline + L-aspartate + ATP = 2-(N(omega)-L-arginino)succinate + AMP + diphosphate + H(+). The protein operates within amino-acid biosynthesis; L-arginine biosynthesis; L-arginine from L-ornithine and carbamoyl phosphate: step 2/3. The protein is Argininosuccinate synthase of Shewanella sediminis (strain HAW-EB3).